The primary structure comprises 312 residues: Olfactory receptor 51B2 (312 aa).

The Extracellular portion of the chain corresponds to 1–23 (MWPNITAAPFLLTGFPGLEAAHH). N-linked (GlcNAc...) asparagine glycosylation occurs at Asn-4. A helical transmembrane segment spans residues 24 to 44 (WISIPFFAVYVCILLGNGMLL). The Cytoplasmic segment spans residues 45–52 (YLIKHDHS). The helical transmembrane segment at 53-73 (LHEPMYYFLTMLAGTDLMVTL) threads the bilayer. Residues 74–97 (TTMPTVMGILWVNHREISSVGCFL) lie on the Extracellular side of the membrane. A disulfide bond links Cys-95 and Cys-187. Residues 98–118 (QAYFIHSLSVVESGSLLAMAY) form a helical membrane-spanning segment. Residues 119-137 (DCFIAIRNPLRYASILTNT) lie on the Cytoplasmic side of the membrane. Residues 138–158 (RVIALGVGVFLRGFVSILPVI) form a helical membrane-spanning segment. At 159-194 (LRLFSFSYCKSHVITRAFCLHQEIMRLACADITFNR) the chain is on the extracellular side. A helical membrane pass occupies residues 195 to 215 (LYPVILISLTIFLDCLIILFS). Topologically, residues 216 to 235 (YILILNTVIGIASGEERAKA) are cytoplasmic. The chain crosses the membrane as a helical span at residues 236-256 (LNTCISHISCVLIFYVTVMGL). Residues 257–271 (TFIYRFGKNVPEVVH) are Extracellular-facing. Residues 272 to 292 (IIMSYIYFLFPPLMNPVIYSI) form a helical membrane-spanning segment. The Cytoplasmic segment spans residues 293–312 (KTKQIQYGIIRLLSKHRFSS).

It belongs to the G-protein coupled receptor 1 family. Ubiquitinated by the CRL2(FEM1A) and CRL2(FEM1C) complexes, which recognize the -Lys-Xaa-Xaa-Arg C-degron at the C-terminus, leading to its degradation.

The protein localises to the cell membrane. Its function is as follows. Odorant receptor. The protein is Olfactory receptor 51B2 (OR51B2) of Homo sapiens (Human).